The following is a 127-amino-acid chain: UPF0102 protein NFA_41430 (127 aa).

This sequence belongs to the UPF0102 family.

The sequence is that of UPF0102 protein NFA_41430 from Nocardia farcinica (strain IFM 10152).